A 152-amino-acid chain; its full sequence is Pleckstrin homology-like domain family A member 2 (152 aa).

2 positions are modified to phosphoserine: S3 and S42. One can recognise a PH domain in the interval 7–99 (VLREGELEKR…WNAAIALALI (93 aa)). The tract at residues 112-152 (SRQERTAPAAPAEDAVAAAAAAPSEPSEPSRPSPQPKPRTP) is disordered. Residues 118 to 138 (APAAPAEDAVAAAAAAPSEPS) are compositionally biased toward low complexity. Residues 140 to 152 (PSRPSPQPKPRTP) are compositionally biased toward pro residues. A phosphoserine mark is found at S141 and S144. The residue at position 151 (T151) is a Phosphothreonine.

This sequence belongs to the PHLDA2 family. In terms of tissue distribution, expressed in placenta and adult prostate gland. In placenta, it is present in all cells of the villous cytotrophoblast. The protein is absent in cells from hydatidiform moles. Hydatidiform mole is a gestation characterized by abnormal development of both fetus and trophoblast. The majority of hydatidiform moles are associated with an excess of paternal to maternal genomes and are likely to result from the abnormal expression of imprinted genes (at protein level). Expressed at low levels in adult liver and lung, and fetal liver. Expressed in adult brain and neuroblastoma, medullablastoma and glioblastoma cell lines.

It localises to the cytoplasm. The protein localises to the membrane. In terms of biological role, plays a role in regulating placenta growth. May act via its PH domain that competes with other PH domain-containing proteins, thereby preventing their binding to membrane lipids. This chain is Pleckstrin homology-like domain family A member 2 (PHLDA2), found in Homo sapiens (Human).